A 414-amino-acid polypeptide reads, in one-letter code: Relaxin-3 receptor 2 (414 aa).

The Extracellular segment spans residues 1–43 (MATSNSSASLPTLFWVNGSGDSVLSTDGAAMPVQFLVLRIMVA). N-linked (GlcNAc...) asparagine glycosylation is found at asparagine 5 and asparagine 17. Residues 44–64 (LAYGLVGIIGLLGNLAVLWVL) traverse the membrane as a helical segment. Residues 65–77 (GNCGQRVPGLSSD) are Cytoplasmic-facing. A helical membrane pass occupies residues 78-98 (TFVFSLALADLGLALTLPFWA). At 99–116 (TESAMDFHWPFGSALCKV) the chain is on the extracellular side. A disulfide bond links cysteine 114 and cysteine 191. The chain crosses the membrane as a helical span at residues 117–137 (VLTTTVLSIYASTFLITALSI). Residues 138–155 (ARYWVVAMAVGPGSHLSV) are Cytoplasmic-facing. A helical membrane pass occupies residues 156-176 (FWARVVTLAVWVAAALVTVPT). The Extracellular segment spans residues 177–209 (AIFGAEVELWGVCLCLLRFPSRYWLGAYQLQRV). Residues 210 to 230 (VLAFIVPLGVITTSYLLLLAF) traverse the membrane as a helical segment. The Cytoplasmic portion of the chain corresponds to 231–255 (LERQQRCRPRQWQDSRVVARSVRVL). A helical transmembrane segment spans residues 256–276 (VASFALCWVPNHVVTLWEILV). Topologically, residues 277–293 (RFDLVPWDSTFYTFHTY) are extracellular. The helical transmembrane segment at 294-316 (ILPITTCLAHSNSCLNPVIYCLL) threads the bilayer. Residues 317–414 (RREPQQVLVS…SQAAVSPGEV (98 aa)) are Cytoplasmic-facing.

This sequence belongs to the G-protein coupled receptor 1 family. As to expression, detected only in bone marrow.

The protein localises to the cell membrane. In terms of biological role, high affinity receptor for INSL5. Also acts as a receptor for RLN3/relaxin-3, as well as bradykinin and kallidin. Binding of the ligand inhibit cAMP accumulation. This Mus musculus (Mouse) protein is Relaxin-3 receptor 2 (Rxfp4).